The chain runs to 224 residues: Synaptogyrin-2 (224 aa).

Met-1 carries the post-translational modification N-acetylmethionine. Ser-3 carries the phosphoserine modification. One can recognise an MARVEL domain in the interval 20–171; the sequence is FLKQPQVVVR…LAFLAYQRYK (152 aa). 4 helical membrane passes run 26-46, 73-93, 105-125, and 147-167; these read VVVR…IFGE, AIGV…IYFP, VIGD…GFCF, and AAIT…FLAY. The disordered stretch occupies residues 196–224; the sequence is PGVPADTYQQPPFTQNAESTEGYQPPPVY. Polar residues predominate over residues 202-217; sequence TYQQPPFTQNAESTEG.

The protein belongs to the synaptogyrin family. In terms of processing, may be tyrosine phosphorylated by Src.

It localises to the cytoplasmic vesicle membrane. It is found in the cytoplasmic vesicle. The protein localises to the secretory vesicle. The protein resides in the synaptic vesicle membrane. May play a role in regulated exocytosis. In neuronal cells, modulates the localization of synaptophysin/SYP into synaptic-like microvesicles and may therefore play a role in the formation and/or the maturation of this vesicles. May also play a role in GLUT4 storage and transport to the plasma membrane. In Bos taurus (Bovine), this protein is Synaptogyrin-2.